We begin with the raw amino-acid sequence, 337 residues long: Prenyltransferase terC (337 aa).

The Mg(2+) site is built by Asp111 and Asp115.

It belongs to the FPP/GGPP synthase family. It depends on Mg(2+) as a cofactor.

Its pathway is secondary metabolite biosynthesis. Prenyltransferase; part of the gene cluster that mediates the biosynthesis of terpendoles, indole-diterpene (IDT) mycotoxins including terpendole I, terpendole K, terpendole C, as well as the kinesin Eg5 inhibitor terpendole E. Terpendoles biosynthesis begins with the synthesis of geranylgeranyl diphosphate (GGPP) by a yet unidentified GGPP synthase. Condensation of indole-3-glycerol phosphate with GGPP by the prenyltransferase terC then forms 3-geranylgeranylindole (3-GGI), followed by epoxidation and cyclization of this intermediate (by the FAD-dependent monooxygeanse terM and the terpene cyclase terB) to form paspaline. The cytochrome monooxygenase terQ then hydroxylates paspalline at C-11 to yield terpendole E. The cytochrome monooxygenase terP converts terpendole E to 13-desoxyterpendole I, and terQ converts 13-desoxyterpendole I into terpendole I. TerF and terK are required for conversion of terpendole I to terpendole C which is further converted to terpendole K. The polypeptide is Prenyltransferase terC (Tolypocladium album (Soil fungus)).